The chain runs to 439 residues: Proline--tRNA ligase (439 aa).

It belongs to the class-II aminoacyl-tRNA synthetase family. ProS type 2 subfamily. Homodimer.

The protein resides in the cytoplasm. It catalyses the reaction tRNA(Pro) + L-proline + ATP = L-prolyl-tRNA(Pro) + AMP + diphosphate. Functionally, catalyzes the attachment of proline to tRNA(Pro) in a two-step reaction: proline is first activated by ATP to form Pro-AMP and then transferred to the acceptor end of tRNA(Pro). This Beijerinckia indica subsp. indica (strain ATCC 9039 / DSM 1715 / NCIMB 8712) protein is Proline--tRNA ligase.